Here is a 793-residue protein sequence, read N- to C-terminus: Probable phosphoketolase 2 (793 aa).

Belongs to the XFP family. Thiamine diphosphate serves as cofactor.

The protein is Probable phosphoketolase 2 of Nostoc sp. (strain PCC 7120 / SAG 25.82 / UTEX 2576).